A 127-amino-acid polypeptide reads, in one-letter code: Small ribosomal subunit protein uS13 (127 aa).

A disordered region spans residues 95 to 127; sequence GLPLRGQRTKTNARTRRGKKGAAIGGKKKATKK.

The protein belongs to the universal ribosomal protein uS13 family. In terms of assembly, part of the 30S ribosomal subunit. Forms a loose heterodimer with protein S19. Forms two bridges to the 50S subunit in the 70S ribosome.

Functionally, located at the top of the head of the 30S subunit, it contacts several helices of the 16S rRNA. In the 70S ribosome it contacts the 23S rRNA (bridge B1a) and protein L5 of the 50S subunit (bridge B1b), connecting the 2 subunits; these bridges are implicated in subunit movement. Contacts the tRNAs in the A and P-sites. This is Small ribosomal subunit protein uS13 from Herpetosiphon aurantiacus (strain ATCC 23779 / DSM 785 / 114-95).